The chain runs to 25 residues: Plasticin-L1 (25 aa).

The protein belongs to the frog skin active peptide (FSAP) family. Plasticin subfamily. Expressed by the skin glands.

Its subcellular location is the secreted. It is found in the target cell membrane. Its function is as follows. May play an immunomodulatory role in frog skin in response to microbial pathogens, since it increases the production of the pro-inflammatory cytokines TNF-alpha, IL-1 beta, IL-12, and IL-23 by mouse peritoneal macrophages and has no effect on the production of the anti-inflammatory cytokine IL-10. It is not known whether stimulation of cytokine production arises from a non-specific interaction of the peptide with the macrophage membrane or from interaction with a specific receptor. Shows a low activity in stimulating insulin release from rat BRIN-BD11 beta cells, and acts without loss of integrity of the plasma membrane. Shows a marked affinity for both neutral and anionic membranes models. Does not show antibacterial (E.coli and S.aureus). Does not show hemolytic activity against human erythrocytes. The polypeptide is Plasticin-L1 (Leptodactylus laticeps (Santa Fe frog)).